A 359-amino-acid chain; its full sequence is Ribosomal RNA small subunit methyltransferase H (359 aa).

S-adenosyl-L-methionine contacts are provided by residues 39 to 41 (AGH), Asp58, Phe87, Asp108, and Gln115. A disordered region spans residues 339 to 359 (IQGSASPGRAKNTARIRTRRG). Basic residues predominate over residues 350–359 (NTARIRTRRG).

The protein belongs to the methyltransferase superfamily. RsmH family.

The protein resides in the cytoplasm. The catalysed reaction is cytidine(1402) in 16S rRNA + S-adenosyl-L-methionine = N(4)-methylcytidine(1402) in 16S rRNA + S-adenosyl-L-homocysteine + H(+). In terms of biological role, specifically methylates the N4 position of cytidine in position 1402 (C1402) of 16S rRNA. The chain is Ribosomal RNA small subunit methyltransferase H from Bifidobacterium longum (strain DJO10A).